Here is a 411-residue protein sequence, read N- to C-terminus: Serine hydroxymethyltransferase (411 aa).

Residue 120 to 122 coordinates (6S)-5,6,7,8-tetrahydrofolate; sequence GHL. Position 225 is an N6-(pyridoxal phosphate)lysine (Lys225). 350-352 contributes to the (6S)-5,6,7,8-tetrahydrofolate binding site; sequence SPF.

It belongs to the SHMT family. Homodimer. Requires pyridoxal 5'-phosphate as cofactor.

It is found in the cytoplasm. The catalysed reaction is (6R)-5,10-methylene-5,6,7,8-tetrahydrofolate + glycine + H2O = (6S)-5,6,7,8-tetrahydrofolate + L-serine. It participates in one-carbon metabolism; tetrahydrofolate interconversion. It functions in the pathway amino-acid biosynthesis; glycine biosynthesis; glycine from L-serine: step 1/1. In terms of biological role, catalyzes the reversible interconversion of serine and glycine with tetrahydrofolate (THF) serving as the one-carbon carrier. This reaction serves as the major source of one-carbon groups required for the biosynthesis of purines, thymidylate, methionine, and other important biomolecules. Also exhibits THF-independent aldolase activity toward beta-hydroxyamino acids, producing glycine and aldehydes, via a retro-aldol mechanism. This Limosilactobacillus reuteri (strain DSM 20016) (Lactobacillus reuteri) protein is Serine hydroxymethyltransferase.